A 43-amino-acid polypeptide reads, in one-letter code: MATKSDEPVFYPVFTVRWLAVHTLAIPTVFFLGAIAAMQFIQR.

A helical membrane pass occupies residues 18-34 (WLAVHTLAIPTVFFLGA). Residue histidine 22 coordinates heme.

Belongs to the PsbE/PsbF family. Heterodimer of an alpha subunit and a beta subunit. PSII is composed of 1 copy each of membrane proteins PsbA, PsbB, PsbC, PsbD, PsbE, PsbF, PsbH, PsbI, PsbJ, PsbK, PsbL, PsbM, PsbT, PsbX, PsbY, PsbZ, Psb30/Ycf12, peripheral proteins PsbO, CyanoQ (PsbQ), PsbU, PsbV and a large number of cofactors. It forms dimeric complexes. Heme b serves as cofactor.

The protein resides in the cellular thylakoid membrane. Functionally, this b-type cytochrome is tightly associated with the reaction center of photosystem II (PSII). PSII is a light-driven water:plastoquinone oxidoreductase that uses light energy to abstract electrons from H(2)O, generating O(2) and a proton gradient subsequently used for ATP formation. It consists of a core antenna complex that captures photons, and an electron transfer chain that converts photonic excitation into a charge separation. The polypeptide is Cytochrome b559 subunit beta (Synechococcus sp. (strain JA-2-3B'a(2-13)) (Cyanobacteria bacterium Yellowstone B-Prime)).